A 331-amino-acid polypeptide reads, in one-letter code: Proton-translocating ferredoxin:NAD(+) oxidoreductase complex subunit D (331 aa).

Helical transmembrane passes span 23-43 (ESVSKIMWSVCLALTPAAVFG), 44-64 (VFNFGIHALEVIITGIIAAVV), and 84-106 (AFLTGLLLSMCLPPDIPPYMVAI). FMN phosphoryl threonine is present on Thr-163. 4 consecutive transmembrane segments (helical) span residues 196–216 (NGSIGETSTILLVLGGLYLIY), 226–246 (VVMIGTVGILTWAFGGTTGIF), 251–271 (VFHMMAGGLVIGAFFMATDMV), and 273–293 (IPMTIKGQIIFALGAGALTSL).

This sequence belongs to the NqrB/RnfD family. As to quaternary structure, the complex is composed of six subunits: RnfA, RnfB, RnfC, RnfD, RnfE and RnfG. It depends on FMN as a cofactor.

The protein localises to the cell membrane. Its function is as follows. Part of a membrane-bound complex that couples electron transfer with translocation of ions across the membrane. Couples electron transfer from reduced ferredoxin to NAD(+) with translocation of H(+) out of the cell. Essential for energy conservation during autotrophic growth. Contributes to ATP synthesis during heterotrophic growth. This Clostridium ljungdahlii (strain ATCC 55383 / DSM 13528 / PETC) protein is Proton-translocating ferredoxin:NAD(+) oxidoreductase complex subunit D.